Consider the following 144-residue polypeptide: HTH-type transcriptional regulator BilQ (144 aa).

In terms of domain architecture, HTH marR-type spans 1 to 134; it reads MEQTFAYYTT…LFTLLQKLGK (134 aa). A DNA-binding region (H-T-H motif) is located at residues 48 to 71; the sequence is QRELAAAVRADEGYAARSVEKLLQ.

Its function is as follows. Transcription regulator that regulates expression of the bilirubin reductase operon (bilQ, bilR and bilS). This chain is HTH-type transcriptional regulator BilQ, found in Clostridium symbiosum (strain WAL-14163).